A 239-amino-acid chain; its full sequence is Xyloglucan-specific endo-beta-1,4-glucanase A (239 aa).

The N-terminal stretch at methionine 1–alanine 14 is a signal peptide. N-linked (GlcNAc...) asparagine glycosylation is present at asparagine 172.

Belongs to the glycosyl hydrolase 12 (cellulase H) family.

It is found in the secreted. It catalyses the reaction xyloglucan + H2O = xyloglucan oligosaccharides.. In terms of biological role, catalyzes endohydrolysis of 1,4-beta-D-glucosidic linkages in xyloglucan with retention of the beta-configuration of the glycosyl residues. Specific for xyloglucan and does not hydrolyze other cell wall components. Active against tamarind xyloglucan. The protein is Xyloglucan-specific endo-beta-1,4-glucanase A (xgeA) of Emericella nidulans (strain FGSC A4 / ATCC 38163 / CBS 112.46 / NRRL 194 / M139) (Aspergillus nidulans).